We begin with the raw amino-acid sequence, 56 residues long: Putative 2-Cys peroxiredoxin BAS1 (56 aa).

The protein belongs to the peroxiredoxin family. AhpC/Prx1 subfamily. Homodimer; disulfide-linked, upon oxidation.

Its subcellular location is the plastid. It localises to the chloroplast. The catalysed reaction is a hydroperoxide + [thioredoxin]-dithiol = an alcohol + [thioredoxin]-disulfide + H2O. In terms of biological role, thiol-specific peroxidase that catalyzes the reduction of hydrogen peroxide and organic hydroperoxides to water and alcohols, respectively. Plays a role in cell protection against oxidative stress by detoxifying peroxides. May be an antioxidant enzyme particularly in the developing shoot and photosynthesizing leaf. This Pinus strobus (Eastern white pine) protein is Putative 2-Cys peroxiredoxin BAS1.